The primary structure comprises 22 residues: Conantokin-Oc (22 aa).

The segment at 1 to 22 is disordered; it reads GEEERKAMAELEAKKAQEALKA. 4-carboxyglutamate is present on residues glutamate 3, glutamate 4, glutamate 10, and glutamate 18.

In terms of tissue distribution, expressed by the venom duct.

Its subcellular location is the secreted. Conantokins inhibit N-methyl-D-aspartate (NMDA) receptors. In Conus ochroleucus (Perfect cone), this protein is Conantokin-Oc.